Consider the following 364-residue polypeptide: Autophagy-related protein 5 (364 aa).

Residues 1-13 are compositionally biased toward polar residues; that stretch reads MASPNPYSYSPQL. The disordered stretch occupies residues 1–103; that stretch reads MASPNPYSYS…SLPPKPKPSS (103 aa). Residues 28-42 show a composition bias toward low complexity; it reads SSPSFRSTPFRSSRG. The segment covering 43 to 53 has biased composition (gly residues); sequence TGAGTGIGLGL. Residues 72-82 are compositionally biased toward basic and acidic residues; that stretch reads RSGDGSHDDLP. Residue Lys-202 forms a Glycyl lysine isopeptide (Lys-Gly) (interchain with G-Cter in ATG12) linkage. Positions 262-306 are disordered; sequence PSSPSPPSSDQQQPQRPGGSSSSGSYRVMQTLVPPRGPNNRTPQT. The span at 269 to 286 shows a compositional bias: low complexity; it reads SSDQQQPQRPGGSSSSGS.

It belongs to the ATG5 family. In terms of assembly, conjugated with atg12. In terms of processing, conjugated to atg12; which is essential for autophagy.

It is found in the preautophagosomal structure membrane. Functionally, involved in cytoplasm to vacuole transport (Cvt) and autophagic vesicle formation. Autophagy is essential for maintenance of amino acid levels and protein synthesis under nitrogen starvation. Required for selective autophagic degradation of the nucleus (nucleophagy). Also required for mitophagy, which eliminates defective or superfluous mitochondria in order to fulfill cellular energy requirements and prevent excess ROS production. Conjugation with atg12, through a ubiquitin-like conjugating system involving apg-5/atg7 as an E1-like activating enzyme and atg10 as an E2-like conjugating enzyme, is essential for its function. The atg12-apg-4/atg5 conjugate acts as an E3-like enzyme which is required for lipidation of apg-6/atg8 and apg-6/atg8 association to the vesicle membranes. The protein is Autophagy-related protein 5 (apg-4) of Neurospora crassa (strain ATCC 24698 / 74-OR23-1A / CBS 708.71 / DSM 1257 / FGSC 987).